We begin with the raw amino-acid sequence, 151 residues long: Methylglyoxal synthase (151 aa).

The 146-residue stretch at 6 to 151 folds into the MGS-like domain; that stretch reads RVMPAHKHIA…DYDAYLAERV (146 aa). Residues His-19, Lys-23, 45 to 48, and 65 to 66 contribute to the substrate site; these read TGTT and SG. Asp-71 serves as the catalytic Proton donor/acceptor. Position 98 (His-98) interacts with substrate.

This sequence belongs to the methylglyoxal synthase family.

It catalyses the reaction dihydroxyacetone phosphate = methylglyoxal + phosphate. Catalyzes the formation of methylglyoxal from dihydroxyacetone phosphate. The sequence is that of Methylglyoxal synthase from Aliivibrio fischeri (strain ATCC 700601 / ES114) (Vibrio fischeri).